The sequence spans 368 residues: p21-activated protein kinase-interacting protein 1-like (368 aa).

WD repeat units lie at residues 45–82 (AHTASLNAVSSSNQFIATGSKDETIQLYDMCKKTEHGA), 85–123 (HHDGTISCLEFYGTSHLLSGGQDGLICVWSTKKWECLKT), 126–165 (AHKGQVTSLSVHPSGKLALSVGTDKTLRTWNLIEGRSAFI), 207–245 (AFTKRISCLKFLKNSLLAVGGDDESVRIYDVTSQKCVCE), and 248–289 (AHEN…IESP).

The protein localises to the nucleus. Its subcellular location is the nucleolus. In terms of biological role, negatively regulates the PAK1 kinase. PAK1 is a member of the PAK kinase family, which has been shown to play a positive role in the regulation of signaling pathways involving MAPK8 and RELA. PAK1 exists as an inactive homodimer, which is activated by binding of small GTPases such as CDC42 to an N-terminal regulatory domain. PAK1IP1 also binds to the N-terminus of PAK1, and inhibits the specific activation of PAK1 by CDC42. May be involved in ribosomal large subunit assembly. The sequence is that of p21-activated protein kinase-interacting protein 1-like (pak1ip1) from Danio rerio (Zebrafish).